The chain runs to 188 residues: Elongation factor P (188 aa).

This sequence belongs to the elongation factor P family.

Its subcellular location is the cytoplasm. The protein operates within protein biosynthesis; polypeptide chain elongation. In terms of biological role, involved in peptide bond synthesis. Stimulates efficient translation and peptide-bond synthesis on native or reconstituted 70S ribosomes in vitro. Probably functions indirectly by altering the affinity of the ribosome for aminoacyl-tRNA, thus increasing their reactivity as acceptors for peptidyl transferase. In Rhodospirillum centenum (strain ATCC 51521 / SW), this protein is Elongation factor P.